A 558-amino-acid polypeptide reads, in one-letter code: 2-isopropylmalate synthase (558 aa).

The Pyruvate carboxyltransferase domain occupies 31 to 306 (PIWCAVDLRD…DPGIDFSNID (276 aa)). Mg(2+)-binding residues include aspartate 40, histidine 245, histidine 247, and asparagine 281. The regulatory domain stretch occupies residues 440 to 558 (AGSPYSFLEH…LCAANHLSDK (119 aa)).

It belongs to the alpha-IPM synthase/homocitrate synthase family. LeuA type 2 subfamily. Homodimer. It depends on Mg(2+) as a cofactor.

It is found in the cytoplasm. It carries out the reaction 3-methyl-2-oxobutanoate + acetyl-CoA + H2O = (2S)-2-isopropylmalate + CoA + H(+). Its pathway is amino-acid biosynthesis; L-leucine biosynthesis; L-leucine from 3-methyl-2-oxobutanoate: step 1/4. Functionally, catalyzes the condensation of the acetyl group of acetyl-CoA with 3-methyl-2-oxobutanoate (2-ketoisovalerate) to form 3-carboxy-3-hydroxy-4-methylpentanoate (2-isopropylmalate). This is 2-isopropylmalate synthase from Rhodospirillum rubrum (strain ATCC 11170 / ATH 1.1.1 / DSM 467 / LMG 4362 / NCIMB 8255 / S1).